We begin with the raw amino-acid sequence, 337 residues long: AP2/ERF and B3 domain-containing transcription factor At1g50680 (337 aa).

A DNA-binding region (AP2/ERF) is located at residues 27–84; the sequence is KYKGVVQQQNGHWGAQIYADHKRIWLGTFKSADEAATAYDSASIKLRSFDANSHRNFP. The TF-B3 DNA-binding region spans 157 to 271; it reads FQKELTPSDV…VKTLEGQRKN (115 aa).

The protein belongs to the AP2/ERF transcription factor family. RAV subfamily.

It is found in the nucleus. Its function is as follows. Probably acts as a transcriptional activator. Binds to the GCC-box pathogenesis-related promoter element. May be involved in the regulation of gene expression by stress factors and by components of stress signal transduction pathways. The protein is AP2/ERF and B3 domain-containing transcription factor At1g50680 of Arabidopsis thaliana (Mouse-ear cress).